Reading from the N-terminus, the 322-residue chain is tRNA uridine(34) hydroxylase (322 aa).

A Rhodanese domain is found at 125-219 (QSPDTVVIDA…YGKDPEVQGK (95 aa)). The active-site Cysteine persulfide intermediate is the Cys179.

The protein belongs to the TrhO family.

The catalysed reaction is uridine(34) in tRNA + AH2 + O2 = 5-hydroxyuridine(34) in tRNA + A + H2O. Catalyzes oxygen-dependent 5-hydroxyuridine (ho5U) modification at position 34 in tRNAs. The chain is tRNA uridine(34) hydroxylase from Bacillus pumilus (strain SAFR-032).